Consider the following 180-residue polypeptide: UPF0340 protein YwlG (180 aa).

The protein belongs to the UPF0340 family.

This chain is UPF0340 protein YwlG (ywlG), found in Bacillus subtilis (strain 168).